The sequence spans 42 residues: Photosystem I reaction center subunit IX (42 aa).

The helical transmembrane segment at 8–28 threads the bilayer; it reads YLSTAPVLLTIWLSFTAALVI.

This sequence belongs to the PsaJ family.

Its subcellular location is the plastid. The protein resides in the chloroplast thylakoid membrane. Its function is as follows. May help in the organization of the PsaE and PsaF subunits. The protein is Photosystem I reaction center subunit IX of Guillardia theta (Cryptophyte).